The primary structure comprises 144 residues: MPPKKKKLAGLIKLQIQAGQANPAPPVGPALGQHGVNIMEFCKAYNAATESQRGNVVPVEISVYEDRTFDFKLKTPPAAKLLLKAAGVAKGSGEPHKTKVASVTMDQVREIAKTKAEDLNANDIEQAAKIIAGTARSMGITVQG.

The protein belongs to the universal ribosomal protein uL11 family. In terms of assembly, part of the ribosomal stalk of the 50S ribosomal subunit. Interacts with L10 and the large rRNA to form the base of the stalk. L10 forms an elongated spine to which L12 dimers bind in a sequential fashion forming a multimeric L10(L12)X complex. One or more lysine residues are methylated.

Its function is as follows. Forms part of the ribosomal stalk which helps the ribosome interact with GTP-bound translation factors. In Rhodococcus erythropolis (strain PR4 / NBRC 100887), this protein is Large ribosomal subunit protein uL11.